A 419-amino-acid chain; its full sequence is Transcription termination factor Rho (419 aa).

Residues 48-123 (DIFGDGVLEI…LKVNEVNYDK (76 aa)) enclose the Rho RNA-BD domain. RNA-binding stretches follow at residues 61–66 (GFGFLR), 78–80 (DIY), and 108–110 (ERY). ATP contacts are provided by residues 169 to 174 (GRGQRG), 181 to 186 (KAGKTI), and Arg212. Residues 284–288 (VLTGG) are RNA-binding 2.

Belongs to the Rho family. Homohexamer. The homohexamer assembles into an open ring structure.

In terms of biological role, facilitates transcription termination by a mechanism that involves Rho binding to the nascent RNA, activation of Rho's RNA-dependent ATPase activity, and release of the mRNA from the DNA template. The sequence is that of Transcription termination factor Rho from Buchnera aphidicola subsp. Acyrthosiphon pisum (strain APS) (Acyrthosiphon pisum symbiotic bacterium).